The following is a 420-amino-acid chain: Peroxisomal biogenesis factor 3 (420 aa).

Residues 1–16 lie on the Peroxisomal side of the membrane; that stretch reads MPIFSSLNSFLRRHKK. Residues 17 to 37 form a helical membrane-spanning segment; that stretch reads KLIVTATLTFSAYFLVNQFII. Topologically, residues 38–420 are cytoplasmic; the sequence is KKLKNFQNSL…FSASIYSNFE (383 aa).

This sequence belongs to the peroxin-3 family.

Its subcellular location is the peroxisome membrane. In terms of biological role, involved in peroxisome biosynthesis. In Debaryomyces hansenii (strain ATCC 36239 / CBS 767 / BCRC 21394 / JCM 1990 / NBRC 0083 / IGC 2968) (Yeast), this protein is Peroxisomal biogenesis factor 3 (PEX3).